An 872-amino-acid chain; its full sequence is Alanine--tRNA ligase (872 aa).

The Zn(2+) site is built by histidine 567, histidine 571, cysteine 669, and histidine 673.

It belongs to the class-II aminoacyl-tRNA synthetase family. Zn(2+) serves as cofactor.

Its subcellular location is the cytoplasm. The catalysed reaction is tRNA(Ala) + L-alanine + ATP = L-alanyl-tRNA(Ala) + AMP + diphosphate. Catalyzes the attachment of alanine to tRNA(Ala) in a two-step reaction: alanine is first activated by ATP to form Ala-AMP and then transferred to the acceptor end of tRNA(Ala). Also edits incorrectly charged Ser-tRNA(Ala) and Gly-tRNA(Ala) via its editing domain. This Streptococcus pyogenes serotype M6 (strain ATCC BAA-946 / MGAS10394) protein is Alanine--tRNA ligase.